The chain runs to 211 residues: Large ribosomal subunit protein uL3 (211 aa).

Residue glutamine 150 is modified to N5-methylglutamine.

The protein belongs to the universal ribosomal protein uL3 family. Part of the 50S ribosomal subunit. Forms a cluster with proteins L14 and L19. Post-translationally, methylated by PrmB.

In terms of biological role, one of the primary rRNA binding proteins, it binds directly near the 3'-end of the 23S rRNA, where it nucleates assembly of the 50S subunit. The sequence is that of Large ribosomal subunit protein uL3 from Pseudomonas fluorescens (strain SBW25).